The primary structure comprises 244 residues: Aspartate/glutamate leucyltransferase (244 aa).

This sequence belongs to the R-transferase family. Bpt subfamily.

The protein resides in the cytoplasm. The enzyme catalyses N-terminal L-glutamyl-[protein] + L-leucyl-tRNA(Leu) = N-terminal L-leucyl-L-glutamyl-[protein] + tRNA(Leu) + H(+). It carries out the reaction N-terminal L-aspartyl-[protein] + L-leucyl-tRNA(Leu) = N-terminal L-leucyl-L-aspartyl-[protein] + tRNA(Leu) + H(+). Functions in the N-end rule pathway of protein degradation where it conjugates Leu from its aminoacyl-tRNA to the N-termini of proteins containing an N-terminal aspartate or glutamate. This Bordetella bronchiseptica (strain ATCC BAA-588 / NCTC 13252 / RB50) (Alcaligenes bronchisepticus) protein is Aspartate/glutamate leucyltransferase.